A 249-amino-acid polypeptide reads, in one-letter code: NH(3)-dependent NAD(+) synthetase (249 aa).

Aspartate 34 serves as a coordination point for Mg(2+). Deamido-NAD(+) is bound at residue arginine 110. Threonine 130 contributes to the ATP binding site. Glutamate 135 contributes to the Mg(2+) binding site. Residues lysine 143 and aspartate 150 each contribute to the deamido-NAD(+) site. The ATP site is built by lysine 159 and serine 181. 232-233 (HK) contacts deamido-NAD(+).

It belongs to the NAD synthetase family. In terms of assembly, homodimer.

It catalyses the reaction deamido-NAD(+) + NH4(+) + ATP = AMP + diphosphate + NAD(+) + H(+). It functions in the pathway cofactor biosynthesis; NAD(+) biosynthesis; NAD(+) from deamido-NAD(+) (ammonia route): step 1/1. Functionally, catalyzes the ATP-dependent amidation of deamido-NAD to form NAD. Uses ammonia as a nitrogen source. The protein is NH(3)-dependent NAD(+) synthetase of Picrophilus torridus (strain ATCC 700027 / DSM 9790 / JCM 10055 / NBRC 100828 / KAW 2/3).